A 629-amino-acid chain; its full sequence is tRNA uridine 5-carboxymethylaminomethyl modification enzyme MnmG (629 aa).

Residues 13-18 (GGGHAG), Val-125, and Ser-180 contribute to the FAD site. Position 273–287 (273–287 (GPRYCPSIEDKVMRF)) interacts with NAD(+). Gln-370 serves as a coordination point for FAD.

Belongs to the MnmG family. In terms of assembly, homodimer. Heterotetramer of two MnmE and two MnmG subunits. It depends on FAD as a cofactor.

It is found in the cytoplasm. Functionally, NAD-binding protein involved in the addition of a carboxymethylaminomethyl (cmnm) group at the wobble position (U34) of certain tRNAs, forming tRNA-cmnm(5)s(2)U34. The polypeptide is tRNA uridine 5-carboxymethylaminomethyl modification enzyme MnmG (Aliivibrio fischeri (strain ATCC 700601 / ES114) (Vibrio fischeri)).